The primary structure comprises 222 residues: MTENRQLGALLAACHWIGEKGWCPATGGNMSLRLDLAHCLITESGKDKGSLAAEDFLLVETANNHVPSGRTPSAETGLHTLLYRLYPEIQAVLHTHSVNATVLSRVERSNALVLQGYEMQKSLSGQRSHLDAVVIPIFDNDQDIPVLAQRVAAYADNRPLQYGFLVRGHGLYCWGNSVVEARRHLEGLEFLFQCELQRRLFDVNSNVDVKPNVDVNPNVEAK.

Histidine 94 and histidine 96 together coordinate Zn(2+).

Belongs to the aldolase class II family. MtnB subfamily. It depends on Zn(2+) as a cofactor.

The catalysed reaction is 5-(methylsulfanyl)-D-ribulose 1-phosphate = 5-methylsulfanyl-2,3-dioxopentyl phosphate + H2O. It functions in the pathway amino-acid biosynthesis; L-methionine biosynthesis via salvage pathway; L-methionine from S-methyl-5-thio-alpha-D-ribose 1-phosphate: step 2/6. Functionally, catalyzes the dehydration of methylthioribulose-1-phosphate (MTRu-1-P) into 2,3-diketo-5-methylthiopentyl-1-phosphate (DK-MTP-1-P). The polypeptide is Methylthioribulose-1-phosphate dehydratase (Yersinia pseudotuberculosis serotype IB (strain PB1/+)).